We begin with the raw amino-acid sequence, 73 residues long: Small ribosomal subunit protein bS18c (73 aa).

Belongs to the bacterial ribosomal protein bS18 family. Part of the 30S ribosomal subunit.

It is found in the plastid. It localises to the chloroplast. This is Small ribosomal subunit protein bS18c from Nephroselmis olivacea (Green alga).